The following is a 279-amino-acid chain: MGTIKIVTDSSITIEPELIKALDITVVPLSVMIDSKLYSDNDLKEEGHFLSLMKASKSLPKTSQPPVGLFAETYENLVKKGVTDIVAIHLSPALSGTIEASRQGAEIAEAPVTVLDSGFTDQAMKFQVVEAAKMAKAGASLNEILAAVQAIKSKTELYIGVSTLENLVKGGRIGRVTGVLSSLLNVKVVMALKNDELKTLVKGRGNKTFTKWLDSYLAKNSHRPIAEIAISYAGEASLALTLKERIAAYYNHSISVLETGSIIQTHTGEGAFAVMVRYE.

In terms of domain architecture, DegV spans 4–278 (IKIVTDSSIT…EGAFAVMVRY (275 aa)). Residues T62 and S95 each contribute to the hexadecanoate site.

Functionally, may bind long-chain fatty acids, such as palmitate, and may play a role in lipid transport or fatty acid metabolism. In Streptococcus pyogenes serotype M6 (strain ATCC BAA-946 / MGAS10394), this protein is DegV domain-containing protein M6_Spy1246.